Reading from the N-terminus, the 1465-residue chain is Neuropathy target esterase sws (1465 aa).

The Lumenal segment spans residues 1-34 (MDVLEMLRASASGSYNTIFSEAWCQYVSKQITAT). A helical membrane pass occupies residues 35–55 (MYMYCALGMMGVLFLAWFMYF). Over 56–1465 (KRMARLRLRD…RSSANNETKN (1410 aa)) the chain is Cytoplasmic. 174–301 (IFGHFEKPVF…IRVIQVIMIR (128 aa)) provides a ligand contact to a nucleoside 3',5'-cyclic phosphate. Polar residues-rich tracts occupy residues 331-349 (STMSGPINSQTSQSSRQTP) and 434-454 (QQSVGNLSTRRSSITQMTPDG). 2 disordered regions span residues 331–421 (STMS…TEVH) and 434–460 (QQSVGNLSTRRSSITQMTPDGSHSCPP). Residues Ser446 and Ser455 each carry the phosphoserine modification. A nucleoside 3',5'-cyclic phosphate is bound by residues 484–611 (ELGL…VVRR) and 600–727 (IVLD…LSHR). Residues 954 to 1120 (LVLGGGGARG…VNNLPGHLWR (167 aa)) enclose the PNPLA domain. Residues 958 to 963 (GGGARG) carry the GXGXXG motif. Positions 985-989 (GVSIG) match the GXSXG motif. The active-site Nucleophile is Ser987. Asp1107 (proton acceptor) is an active-site residue. The DGA/G motif lies at 1107-1109 (DGG). Residue Ser1201 is modified to Phosphoserine. Residues 1371–1465 (LERKTDKSTQ…RSSANNETKN (95 aa)) form a disordered region. The segment covering 1378–1390 (STQSSPPTSSRTS) has biased composition (low complexity). The span at 1392-1402 (RGKEEARHMDN) shows a compositional bias: basic and acidic residues. Residues 1413–1424 (TGSGATEGIHTS) are compositionally biased toward polar residues. Over residues 1447–1456 (VYKDEDKENR) the composition is skewed to basic and acidic residues.

This sequence belongs to the NTE family. As to quaternary structure, interacts with Pka-C3; interaction inhibits the catalytic function of Pka-C3 and the esterase activity of sws.

It is found in the endoplasmic reticulum membrane. It carries out the reaction a 1-acyl-sn-glycero-3-phosphocholine + H2O = sn-glycerol 3-phosphocholine + a fatty acid + H(+). Its function is as follows. Phospholipase B that deacylates intracellular phosphatidylcholine (PtdCho), generating glycerophosphocholine (GroPtdCho). This deacylation occurs at both sn-2 and sn-1 positions of PtdCho. Its specific chemical modification by certain organophosphorus (OP) compounds leads to distal axonopathy. Plays a role in the signaling mechanism between neurons and glia that regulates glia wrapping during development of the adult brain. Essential for membrane lipid homeostasis and cell survival in both neurons and glia of the adult brain. This chain is Neuropathy target esterase sws, found in Drosophila erecta (Fruit fly).